Here is a 191-residue protein sequence, read N- to C-terminus: HTH-type transcriptional regulator SAR0097 (191 aa).

The HTH tetR-type domain occupies 12-74 (AEYNQQIILT…AIMDKKVDQM (63 aa)). A DNA-binding region (H-T-H motif) is located at residues 37–56 (KMSDIAKISGVGVGTLYRHF).

The protein is HTH-type transcriptional regulator SAR0097 of Staphylococcus aureus (strain MRSA252).